We begin with the raw amino-acid sequence, 338 residues long: Heme-dependent oxidative N-demethylase alpha subunit (338 aa).

The heme b site is built by tyrosine 38 and histidine 194. Arginine 224 acts as the Proton donor in catalysis. Asparagine 226 lines the heme b pocket. Glutamate 266 lines the dimethylamine pocket. Residues tyrosine 317 and lysine 318 each coordinate heme b.

The heme-dependent oxidative N-demethylase (HODM) is a heterotetramer composed of a catalytic alpha subunit, a FMN/2Fe-2S-dependent oxidoreductase beta subunit, a gamma subunit with putative aminotransferase activity, and a delta subunit of unknown function.

It catalyses the reaction dimethylamine + NADPH + O2 + H(+) = methylamine + formaldehyde + NADP(+) + H2O. Its function is as follows. Component of the heme-dependent oxidative N-demethylase (HODM) enzyme, that catalyzes the NADPH-dependent oxidation of dimethylamine (DMA) to methylamine (MA) and formaldehyde. Functions in bacterial methylated amine catabolism, linking alkylamine oxidation to the tetrahydrofolate C1 pool. The alpha subunit of HODM binds heme, oxygen and DMA, and serves as the site of the oxidative N-demethylase activity. This chain is Heme-dependent oxidative N-demethylase alpha subunit, found in Ectopseudomonas mendocina (strain ymp) (Pseudomonas mendocina).